The primary structure comprises 476 residues: S-adenosylmethionine-dependent nucleotide dehydratase (476 aa).

A cytidylate kinase-like domain region spans residues Met1–Ile168. Residue Gly9–Thr17 participates in ATP binding. The Radical SAM core domain maps to Asn176 to Glu400. The prokaryotic viperin domain stretch occupies residues Ser183–Glu476. [4Fe-4S] cluster contacts are provided by Cys192, Cys196, and Cys199.

In the N-terminal section; belongs to the cytidylate kinase-like family. It in the C-terminal section; belongs to the radical SAM superfamily. Viperin family. It depends on [4Fe-4S] cluster as a cofactor.

It catalyses the reaction GTP + AH2 + S-adenosyl-L-methionine = 3'-deoxy-3',4'-didehydro-GTP + 5'-deoxyadenosine + L-methionine + A + H2O + H(+). Functionally, expression of pVip60 in E.coli (strain MG1655) confers resistance to phage T7; prevents culture collapse upon infection. Catalyzes the conversion of guanosine triphosphate (GTP) to 3'-deoxy-3',4'-didehydro-GTP (ddhGTP), probably via a SAM-dependent radical mechanism. The modified nucleotide represses transcription from T7 RNA polymerase-directed genes (possibly by acting as chain terminators), strongly suggesting these nucleotides block viral polymerase transcription. The N-terminus of the protein may generate NTP for use by the viperin domain. This Lacinutrix mariniflava (strain JCM 13824 / KCCM 42306 / AKS432) protein is S-adenosylmethionine-dependent nucleotide dehydratase.